Reading from the N-terminus, the 87-residue chain is Large ribosomal subunit protein bL27 (87 aa).

Residues M1 to L21 form a disordered region.

It belongs to the bacterial ribosomal protein bL27 family.

This chain is Large ribosomal subunit protein bL27, found in Paraburkholderia phytofirmans (strain DSM 17436 / LMG 22146 / PsJN) (Burkholderia phytofirmans).